Reading from the N-terminus, the 359-residue chain is S-adenosylmethionine:tRNA ribosyltransferase-isomerase (359 aa).

It belongs to the QueA family. As to quaternary structure, monomer.

The protein localises to the cytoplasm. It catalyses the reaction 7-aminomethyl-7-carbaguanosine(34) in tRNA + S-adenosyl-L-methionine = epoxyqueuosine(34) in tRNA + adenine + L-methionine + 2 H(+). Its pathway is tRNA modification; tRNA-queuosine biosynthesis. Its function is as follows. Transfers and isomerizes the ribose moiety from AdoMet to the 7-aminomethyl group of 7-deazaguanine (preQ1-tRNA) to give epoxyqueuosine (oQ-tRNA). This Synechococcus elongatus (strain ATCC 33912 / PCC 7942 / FACHB-805) (Anacystis nidulans R2) protein is S-adenosylmethionine:tRNA ribosyltransferase-isomerase.